The sequence spans 1427 residues: DNA-directed RNA polymerase subunit beta' (1427 aa).

Cys70, Cys72, Cys85, and Cys88 together coordinate Zn(2+). Positions 461, 463, and 465 each coordinate Mg(2+). Residues Cys809, Cys882, Cys889, and Cys892 each contribute to the Zn(2+) site. Positions 1394-1427 (EAAIGDDPLGKVQGEDFTTDDVMVEERPEGASEE) are disordered. Residues 1417–1427 (VEERPEGASEE) show a composition bias toward basic and acidic residues.

Belongs to the RNA polymerase beta' chain family. As to quaternary structure, the RNAP catalytic core consists of 2 alpha, 1 beta, 1 beta' and 1 omega subunit. When a sigma factor is associated with the core the holoenzyme is formed, which can initiate transcription. It depends on Mg(2+) as a cofactor. Zn(2+) is required as a cofactor.

It carries out the reaction RNA(n) + a ribonucleoside 5'-triphosphate = RNA(n+1) + diphosphate. DNA-dependent RNA polymerase catalyzes the transcription of DNA into RNA using the four ribonucleoside triphosphates as substrates. The protein is DNA-directed RNA polymerase subunit beta' of Sphingopyxis alaskensis (strain DSM 13593 / LMG 18877 / RB2256) (Sphingomonas alaskensis).